A 516-amino-acid chain; its full sequence is MSNKPIADMIETIEHFAQTQPSYPVYNVLGQEHTYGDLKADSDSLAAVIDQLGLPEKSPVVVFGGQEYEMLATFVALTKSGHAYIPIDSHSALERVSAILEVAEPSLIIAISAFPLEQVSTPMINLAQVQEAFAQGNNYEITHPVKGDDNYYIIFTSGTTGKPKGVQISHDNLLSFTNWMITDKEFATPSRPQMLAQPPYSFDLSVMYWAPTLALGGTLFTLPSVITQDFKQLFAAIFSLPIAIWTSTPSFADMAMLSEYFNSEKMPGITHFYFDGEELTVKTAQKLRERFPNARIINAYGPTEATVALSAVAVTDEMLATLKRLPIGYTKADSPTFIIDEEGNKLPNGEQGEIIVSGPAVSKGYMKNPEKTAEAFFEFEGLPAYHTGDVGTMTDEGLLLYGGRMDFQIKFNGYRIELEDVSQNLNKSRFIESAVAVPRYNKDHKVQNLLAYVILKDGVREQFERDIDITKAIKEDLTDIMMSYMMPSKFLYRDSLPLTPNGKIDIKGLINEVNKR.

156 to 157 (TS) serves as a coordination point for ATP. D203 provides a ligand contact to D-alanine. 298–303 (NAYGPT) contributes to the ATP binding site. V307 serves as a coordination point for D-alanine. ATP contacts are provided by residues D389, 401–404 (YGGR), and K503. A D-alanine-binding site is contributed by K503.

Belongs to the ATP-dependent AMP-binding enzyme family. DltA subfamily.

It localises to the cytoplasm. It carries out the reaction holo-[D-alanyl-carrier protein] + D-alanine + ATP = D-alanyl-[D-alanyl-carrier protein] + AMP + diphosphate. The protein operates within cell wall biogenesis; lipoteichoic acid biosynthesis. Functionally, catalyzes the first step in the D-alanylation of lipoteichoic acid (LTA), the activation of D-alanine and its transfer onto the D-alanyl carrier protein (Dcp) DltC. In an ATP-dependent two-step reaction, forms a high energy D-alanyl-AMP intermediate, followed by transfer of the D-alanyl residue as a thiol ester to the phosphopantheinyl prosthetic group of the Dcp. D-alanylation of LTA plays an important role in modulating the properties of the cell wall in Gram-positive bacteria, influencing the net charge of the cell wall. This is D-alanine--D-alanyl carrier protein ligase from Streptococcus pneumoniae (strain ATCC 700669 / Spain 23F-1).